A 368-amino-acid polypeptide reads, in one-letter code: Protein tesmin/TSO1-like CXC 8 (368 aa).

The 122-residue stretch at 64–185 folds into the CRC domain; sequence KHKGCRCKQS…KCINCKNVSE (122 aa).

It belongs to the lin-54 family.

The protein localises to the nucleus. Plays a role in development of both male and female reproductive tissues. The polypeptide is Protein tesmin/TSO1-like CXC 8 (TCX8) (Arabidopsis thaliana (Mouse-ear cress)).